A 234-amino-acid polypeptide reads, in one-letter code: uncharacterized protein (234 aa).

This is an uncharacterized protein from Escherichia coli (strain K12).